We begin with the raw amino-acid sequence, 169 residues long: Queuosine precursor transporter QueT (169 aa).

A run of 5 helical transmembrane segments spans residues 9–29 (IVTI…PGLS), 44–64 (LNFT…GCMI), 73–93 (VDVI…VLLF), 110–130 (FFFF…ELKF), and 137–157 (LLTW…GAFI).

It belongs to the vitamin uptake transporter (VUT/ECF) (TC 2.A.88) family. In E.coli forms a stable energy-coupling factor (ECF) transporter complex composed of 2 membrane-embedded substrate-binding protein (S component), 2 ATP-binding proteins (A and A' components) and 2 transmembrane proteins (T component), probably with a stoichiometry of 2:1:1:2. May be able to interact with more than 1 S component at a time.

Its subcellular location is the cell membrane. In terms of biological role, probably a queuosine precursor-binding protein that interacts with the energy-coupling factor (ECF) ABC-transporter complex. Unlike classic ABC transporters this ECF transporter provides the energy necessary to transport a number of different substrates. The substrates themselves are bound by transmembrane, not extracytoplasmic soluble proteins. The sequence is that of Queuosine precursor transporter QueT (queT) from Lactococcus lactis subsp. cremoris (strain MG1363).